Reading from the N-terminus, the 274-residue chain is Pantothenate synthetase (274 aa).

26–33 (MGNLHAGH) contributes to the ATP binding site. H33 acts as the Proton donor in catalysis. Q57 serves as a coordination point for (R)-pantoate. A beta-alanine-binding site is contributed by Q57. Residue 143 to 146 (GKKD) participates in ATP binding. Residue Q149 coordinates (R)-pantoate. Residues V172 and 180-183 (LSSR) contribute to the ATP site.

This sequence belongs to the pantothenate synthetase family. In terms of assembly, homodimer.

It is found in the cytoplasm. The enzyme catalyses (R)-pantoate + beta-alanine + ATP = (R)-pantothenate + AMP + diphosphate + H(+). It functions in the pathway cofactor biosynthesis; (R)-pantothenate biosynthesis; (R)-pantothenate from (R)-pantoate and beta-alanine: step 1/1. Its function is as follows. Catalyzes the condensation of pantoate with beta-alanine in an ATP-dependent reaction via a pantoyl-adenylate intermediate. This Dechloromonas aromatica (strain RCB) protein is Pantothenate synthetase.